The sequence spans 81 residues: Photosystem I iron-sulfur center (81 aa).

2 consecutive 4Fe-4S ferredoxin-type domains span residues 2–31 and 39–68; these read AHSV…MIPW and IASA…VRVY. The [4Fe-4S] cluster site is built by Cys-11, Cys-14, Cys-17, Cys-21, Cys-48, Cys-51, Cys-54, and Cys-58.

In terms of assembly, the eukaryotic PSI reaction center is composed of at least 11 subunits. [4Fe-4S] cluster is required as a cofactor.

The protein localises to the plastid. It is found in the chloroplast thylakoid membrane. The enzyme catalyses reduced [plastocyanin] + hnu + oxidized [2Fe-2S]-[ferredoxin] = oxidized [plastocyanin] + reduced [2Fe-2S]-[ferredoxin]. Functionally, apoprotein for the two 4Fe-4S centers FA and FB of photosystem I (PSI); essential for photochemical activity. FB is the terminal electron acceptor of PSI, donating electrons to ferredoxin. The C-terminus interacts with PsaA/B/D and helps assemble the protein into the PSI complex. Required for binding of PsaD and PsaE to PSI. PSI is a plastocyanin-ferredoxin oxidoreductase, converting photonic excitation into a charge separation, which transfers an electron from the donor P700 chlorophyll pair to the spectroscopically characterized acceptors A0, A1, FX, FA and FB in turn. This Staurastrum punctulatum (Green alga) protein is Photosystem I iron-sulfur center.